Reading from the N-terminus, the 934-residue chain is MARCSVLYFILLSALINKGQACFCDHYPWTQWTSCSKTCNSGTQSRHRQIVVDKYYQENFCEQICSKQETRECNWQRCPINCLLGDFGPWSDCDPCVEKQSKVRSVLRPSQFGGQPCTEPLVAFQPCIPSKLCKIEEADCKNKFRCDSGRCIARKLECNGENDCGDNSDERDCGRTKAVCTRKYDPIPSVQLMGSGFHFLAGEPRGEVLDNSFTGGICKTVKSSRTSNPYRVPANLENVGFEVQTAEDDLKTDFYKDLTSLGHNENQQGSFSSQGGSSFSVPIFYSSKRSENINHNSAFKQAIQASHKKDSSFIRIHKVMKVLNFTTKAKDLHLSDIFLKALNHLPLEYNSALYSRIFDDFGTHYFTSGSLGGVYDLLYQFSSEELKNSGLTEEEAKHCVRIETKKRVLFAKKTKVEHRCTTNKLSEKHEGSFIEGAEKSISLIRGGRSEYAAALAWEKGSSGLEEKTFSEWLESVKENPAVIDFELAPIVDLVRNIPCAVTKRNNLRKAFQEYAAKFDPCQCAPCPNNGRPTLSGTECLCVCQSGTYGENCERRSPDYKSNAVDGHWGCWSSWSTCDATYKRSRTRECNNPAPQRGGKHCEGEKRQEEDCTFSIMENNGQPCINDDEEMKEIDLPEIEADSGCPQPIPPENGFIRNEKKLYSVGEDVEILCLTGFETVGYQYFRCLPDGTWRQGDVECQRTECIKPVVQEVLTITPFQRLYRIGESIELTCPKGFVVAGPSRYTCQGNSWTPPISNSLTCEKDTLIKLKGHCQPGQKQSGSECICMYPEEDCSHYSEDLCVFDTDSNDYFTSPACKFLAEKCLNNQQLHFLHIGSCQDGRQLEWGLERARFSSNSTKKESCGYDTCYDWEKCSASTSKCVCLLPPQCFKGGNQLYCVKMGSSTSEKTLNICEVGAIRCANRKMEILHPGKCLA.

The signal sequence occupies residues 1–21; sequence MARCSVLYFILLSALINKGQA. Cystine bridges form between Cys-22-Cys-61, Cys-24-Cys-65, Cys-35-Cys-73, Cys-39-Cys-78, Cys-82-Cys-117, Cys-93-Cys-127, Cys-96-Cys-133, Cys-140-Cys-151, Cys-146-Cys-164, Cys-158-Cys-173, and Cys-180-Cys-218. TSP type-1 domains follow at residues 22–79 and 81–134; these read CFCD…QRCP and NCLL…KLCK. Trp-29 and Trp-32 each carry a C-linked (Man) tryptophan glycan. Thr-38 is a glycosylation site (O-linked (Fuc...) threonine). A glycan (C-linked (Man) tryptophan) is linked at Trp-90. One can recognise an LDL-receptor class A domain in the interval 138-175; sequence ADCKNKFRCDSGRCIARKLECNGENDCGDNSDERDCGR. Ca(2+) is bound by residues Leu-156, Asn-159, Glu-161, Asp-163, Asp-169, and Glu-170. Positions 176–522 constitute an MACPF domain; it reads TKAVCTRKYD…EYAAKFDPCQ (347 aa). A beta stranded membrane pass occupies residues 278-290; sequence SFSVPIFYSSKRS. N-linked (GlcNAc...) asparagine glycosylation is present at Asn-324. Thr-392 carries O-linked (Fuc...) threonine glycosylation. 16 cysteine pairs are disulfide-bonded: Cys-399/Cys-420, Cys-499/Cys-623, Cys-521/Cys-570, Cys-523/Cys-539, Cys-526/Cys-541, Cys-543/Cys-552, Cys-577/Cys-611, Cys-589/Cys-601, Cys-644/Cys-686, Cys-672/Cys-699, Cys-704/Cys-746, Cys-732/Cys-761, Cys-773/Cys-823, Cys-784/Cys-801, Cys-786/Cys-837, and Cys-793/Cys-816. Residues 402–415 traverse the membrane as a beta stranded segment; that stretch reads IETKKRVLFAKKTK. Residues 523-553 form the EGF-like domain; sequence CAPCPNNGRPTLSGTECLCVCQSGTYGENCE. The 48-residue stretch at 565-612 folds into the TSP type-1 3 domain; it reads DGHWGCWSSWSTCDATYKRSRTRECNNPAPQRGGKHCEGEKRQEEDCT. Residues Trp-568, Trp-571, and Trp-574 are each glycosylated (C-linked (Man) tryptophan). CCP regions lie at residues 611–688 and 689–765; these read CTFS…RCLP and DGTW…EKDT. 2 Sushi domains span residues 642-701 and 702-763; these read SGCP…ECQR and TECI…TCEK. Residues 642–934 are C5b-binding domain; it reads SGCPQPIPPE…EILHPGKCLA (293 aa). The factor I module (FIM) 1 stretch occupies residues 766–840; it reads LIKLKGHCQP…FLHIGSCQDG (75 aa). The Kazal-like 1 domain occupies 780-839; it reads SGSECICMYPEEDCSHYSEDLCVFDTDSNDYFTSPACKFLAEKCLNNQQLHFLHIGSCQD. An N-linked (GlcNAc...) asparagine glycan is attached at Asn-855. Residues 858–934 are factor I module (FIM) 2; it reads KKESCGYDTC…EILHPGKCLA (77 aa). Disulfide bonds link Cys-862/Cys-873, Cys-867/Cys-919, Cys-880/Cys-897, Cys-882/Cys-932, and Cys-888/Cys-912. Residues 876–934 enclose the Kazal-like 2 domain; the sequence is STSKCVCLLPPQCFKGGNQLYCVKMGSSTSEKTLNICEVGAIRCANRKMEILHPGKCLA.

This sequence belongs to the complement C6/C7/C8/C9 family. In terms of assembly, component of the membrane attack complex (MAC), composed of complement C5b, C6, C7, C8A, C8B, C8G and multiple copies of the pore-forming subunit C9. All cysteine residues are assumed to be cross-linked to one another. Individual modules containing an even number of conserved cysteine residues are supposed to have disulfide linkages only within the same module.

It is found in the secreted. It localises to the target cell membrane. Membrane attack complex (MAC) assembly is inhibited by CD59, thereby protecting self-cells from damage during complement activation. MAC assembly is also inhibited by clusterin (CLU) chaperones that inhibit polymerization of C9. Functionally, component of the membrane attack complex (MAC), a multiprotein complex activated by the complement cascade, which inserts into a target cell membrane and forms a pore, leading to target cell membrane rupture and cell lysis. The MAC is initiated by proteolytic cleavage of C5 into complement C5b in response to the classical, alternative, lectin and GZMK complement pathways. The complement pathways consist in a cascade of proteins that leads to phagocytosis and breakdown of pathogens and signaling that strengthens the adaptive immune system. Together with component C5b, involved in MAC complex assembly: complement C5b and C6 associate with the outer leaflet of target cell membrane, reducing the energy for membrane bending. This is Complement component C6 (C6) from Pongo pygmaeus (Bornean orangutan).